Reading from the N-terminus, the 179-residue chain is Trypsin inhibitor (179 aa).

Gln-1 carries the post-translational modification Pyrrolidone carboxylic acid. 2 cysteine pairs are disulfide-bonded: Cys-40-Cys-85 and Cys-132-Cys-143.

Belongs to the protease inhibitor I3 (leguminous Kunitz-type inhibitor) family. In terms of assembly, heterodimer of an alpha and a beta chain linked by a disulfide bond. In terms of tissue distribution, abundant in dry seeds.

The protein localises to the secreted. Inhibits trypsin, plasmin, human plasma kallikrein, chymotrypsin and factor XIIa activity. The sequence is that of Trypsin inhibitor from Leucaena leucocephala (White popinac).